The sequence spans 101 residues: MTLFSSISSMSTSMSGSKSSISSFGSGTGMGSNSIACGGGCGGSGGILGSGLGLGLGLGLDLTGGSRSRGACGGNGGNRGNGNGGMGGGNGSCCGGPCCGI.

The interval 1–26 is disordered; the sequence is MTLFSSISSMSTSMSGSKSSISSFGS.

The protein belongs to the hssA/B family.

This Dictyostelium discoideum (Social amoeba) protein is HssA/B-like protein 40 (hssl40).